A 404-amino-acid polypeptide reads, in one-letter code: Sulfate adenylyltransferase (404 aa).

Belongs to the sulfate adenylyltransferase family.

It carries out the reaction sulfate + ATP + H(+) = adenosine 5'-phosphosulfate + diphosphate. Its pathway is sulfur metabolism; hydrogen sulfide biosynthesis; sulfite from sulfate: step 1/3. In Chlorobium chlorochromatii (strain CaD3), this protein is Sulfate adenylyltransferase.